We begin with the raw amino-acid sequence, 337 residues long: Anthranilate phosphoribosyltransferase (337 aa).

5-phospho-alpha-D-ribose 1-diphosphate-binding positions include Gly-81, 84 to 85 (GD), Thr-89, 91 to 94 (NIST), 109 to 117 (KHGNRALSS), and Thr-121. Gly-81 serves as a coordination point for anthranilate. Ser-93 is a binding site for Mg(2+). Asn-112 is a binding site for anthranilate. Arg-167 is an anthranilate binding site. The Mg(2+) site is built by Asp-225 and Glu-226.

It belongs to the anthranilate phosphoribosyltransferase family. Homodimer. It depends on Mg(2+) as a cofactor.

It carries out the reaction N-(5-phospho-beta-D-ribosyl)anthranilate + diphosphate = 5-phospho-alpha-D-ribose 1-diphosphate + anthranilate. Its pathway is amino-acid biosynthesis; L-tryptophan biosynthesis; L-tryptophan from chorismate: step 2/5. Functionally, catalyzes the transfer of the phosphoribosyl group of 5-phosphorylribose-1-pyrophosphate (PRPP) to anthranilate to yield N-(5'-phosphoribosyl)-anthranilate (PRA). The sequence is that of Anthranilate phosphoribosyltransferase from Sinorhizobium medicae (strain WSM419) (Ensifer medicae).